Here is a 324-residue protein sequence, read N- to C-terminus: NAD kinase (324 aa).

Catalysis depends on D89, which acts as the Proton acceptor. NAD(+)-binding positions include 89-90, R94, 163-164, D193, and 204-209; these read DG, NE, and TAYAFS.

The protein belongs to the NAD kinase family. Requires a divalent metal cation as cofactor.

The protein resides in the cytoplasm. It carries out the reaction NAD(+) + ATP = ADP + NADP(+) + H(+). In terms of biological role, involved in the regulation of the intracellular balance of NAD and NADP, and is a key enzyme in the biosynthesis of NADP. Catalyzes specifically the phosphorylation on 2'-hydroxyl of the adenosine moiety of NAD to yield NADP. This is NAD kinase from Nocardia farcinica (strain IFM 10152).